The chain runs to 274 residues: Chromatin modification-related protein YNG2 (274 aa).

Residues 121–194 (EDEMESGPDF…ASTEREGTLD (74 aa)) are disordered. Positions 166-180 (THREKSYNKGDDTAD) are enriched in basic and acidic residues. Residues 215 to 264 (NLYCFCQRVSFGEMVACDGPNCKYEWFHYECVNLTEPPKGTWYCPDCKQE) form a PHD-type zinc finger. Positions 218, 220, 231, 236, 242, 245, 258, and 261 each coordinate Zn(2+).

The protein belongs to the ING family. As to quaternary structure, interacts with H3K4me3 and to a lesser extent with H3K4me2. Component of the NuA4 histone acetyltransferase complex.

The protein localises to the nucleus. Functionally, component of the NuA4 histone acetyltransferase complex which is involved in transcriptional activation of selected genes principally by acetylation of nucleosomal histone H4 and H2A. The NuA4 complex is also involved in DNA repair. Involved in cell cycle progression and meiosis. This Candida glabrata (strain ATCC 2001 / BCRC 20586 / JCM 3761 / NBRC 0622 / NRRL Y-65 / CBS 138) (Yeast) protein is Chromatin modification-related protein YNG2 (YNG2).